The following is a 115-amino-acid chain: Large ribosomal subunit protein uL24 (115 aa).

The protein belongs to the universal ribosomal protein uL24 family. As to quaternary structure, part of the 50S ribosomal subunit.

One of two assembly initiator proteins, it binds directly to the 5'-end of the 23S rRNA, where it nucleates assembly of the 50S subunit. In terms of biological role, one of the proteins that surrounds the polypeptide exit tunnel on the outside of the subunit. The chain is Large ribosomal subunit protein uL24 from Synechocystis sp. (strain ATCC 27184 / PCC 6803 / Kazusa).